We begin with the raw amino-acid sequence, 200 residues long: Recombination protein RecR (200 aa).

The C4-type zinc finger occupies 60–75 (CVYCQALTEDDVCNIC). A Toprim domain is found at 83-177 (TKLCIIESML…KISRIGFGVP (95 aa)).

This sequence belongs to the RecR family.

Functionally, may play a role in DNA repair. It seems to be involved in an RecBC-independent recombinational process of DNA repair. It may act with RecF and RecO. In Francisella tularensis subsp. mediasiatica (strain FSC147), this protein is Recombination protein RecR.